A 372-amino-acid chain; its full sequence is MRSKVTGAQRWVVKIGSALLTADGKGLDRNAMGVWVEQMVALHEAGVELVLVSSGAVAAGMSRLGWTARPSAMHELQAAAAIGQMGLVQAWESSFAEHGRHTAQILLTHDDLSDRKRYLNARSTLRTLVELGVVPVINENDTVVTDEIRFGDNDTLAALVANLVEADLLVILTDRDGMFDADPRNNPEAQLIYEARADDPALDAVAGGTGGALGRGGMQTKLRAARLAARSGAHTVIVGGRIERVLARLKGGERLGTLLSPERGMLAARKQWLAGHLQTRGTLVLDDGAVAALARDQKSLLPVGVKLVQGSFRRGEMVVCVAQDGREIARGLSNYSAIEAQKIIGHSSESIVRELGYMAEPELIHRDNLILV.

ATP is bound at residue lysine 14. Substrate-binding residues include serine 54, aspartate 141, and asparagine 153. 173–174 (TD) is a binding site for ATP. The PUA domain maps to 280–358 (RGTLVLDDGA…ESIVRELGYM (79 aa)).

Belongs to the glutamate 5-kinase family.

Its subcellular location is the cytoplasm. The enzyme catalyses L-glutamate + ATP = L-glutamyl 5-phosphate + ADP. The protein operates within amino-acid biosynthesis; L-proline biosynthesis; L-glutamate 5-semialdehyde from L-glutamate: step 1/2. Its function is as follows. Catalyzes the transfer of a phosphate group to glutamate to form L-glutamate 5-phosphate. The polypeptide is Glutamate 5-kinase (Pseudomonas syringae pv. syringae (strain B728a)).